The following is an 855-amino-acid chain: Cell surface glycoprotein (855 aa).

A signal peptide spans 1 to 22 (MTANKQVRAVLLAALMVFSVFA). Asn-78, Asn-83, Asn-108, Asn-167, Asn-174, Asn-187, Asn-203, Asn-227, Asn-230, Asn-313, Asn-363, Asn-441, Asn-548, Asn-588, Asn-608, Asn-620, Asn-642, Asn-656, and Asn-754 each carry an N-linked (GlcNAc...) asparagine glycan. The segment covering 782-802 (ETTTAAETTTTEESTETTTTE) has biased composition (low complexity). A disordered region spans residues 782 to 831 (ETTTAAETTTTEESTETTTTEESTEEPTETATATEEPTEEATEETTESST). Over residues 817–827 (EPTEEATEETT) the composition is skewed to acidic residues. Residues 831-851 (TPGFGVVVALVALVAAALLAV) form a helical membrane-spanning segment. Residues 832–834 (PGF) carry the PGF sorting signal motif.

It belongs to the halobacterial S-layer protein family. Glycosylated. Post-translationally, cleaved by the archaeosortase ArtA at the C-terminus, with removal of a short hydrophobic segment. In terms of processing, lipidation.

Its subcellular location is the secreted. It is found in the cell wall. The protein localises to the S-layer. The protein resides in the cell membrane. S-layer protein. The S-layer is a paracrystalline mono-layered assembly of proteins which coats the surface of the cell. This is Cell surface glycoprotein from Haloferax gibbonsii.